The following is a 360-amino-acid chain: Phosphate acyltransferase (360 aa).

It belongs to the PlsX family. In terms of assembly, homodimer. Probably interacts with PlsY.

Its subcellular location is the cytoplasm. The catalysed reaction is a fatty acyl-[ACP] + phosphate = an acyl phosphate + holo-[ACP]. The protein operates within lipid metabolism; phospholipid metabolism. Functionally, catalyzes the reversible formation of acyl-phosphate (acyl-PO(4)) from acyl-[acyl-carrier-protein] (acyl-ACP). This enzyme utilizes acyl-ACP as fatty acyl donor, but not acyl-CoA. The chain is Phosphate acyltransferase from Thermobifida fusca (strain YX).